We begin with the raw amino-acid sequence, 446 residues long: Tubulin beta chain (446 aa).

Positions 11, 69, 138, 142, 143, 144, 204, and 226 each coordinate GTP. E69 provides a ligand contact to Mg(2+). Residues 422–446 (YQQYQDAGIDEEEEEYEEELPEGEE) are disordered. A compositionally biased stretch (acidic residues) spans 429–446 (GIDEEEEEYEEELPEGEE).

It belongs to the tubulin family. Dimer of alpha and beta chains. A typical microtubule is a hollow water-filled tube with an outer diameter of 25 nm and an inner diameter of 15 nM. Alpha-beta heterodimers associate head-to-tail to form protofilaments running lengthwise along the microtubule wall with the beta-tubulin subunit facing the microtubule plus end conferring a structural polarity. Microtubules usually have 13 protofilaments but different protofilament numbers can be found in some organisms and specialized cells. The cofactor is Mg(2+).

It is found in the cytoplasm. The protein localises to the cytoskeleton. Functionally, tubulin is the major constituent of microtubules, a cylinder consisting of laterally associated linear protofilaments composed of alpha- and beta-tubulin heterodimers. Microtubules grow by the addition of GTP-tubulin dimers to the microtubule end, where a stabilizing cap forms. Below the cap, tubulin dimers are in GDP-bound state, owing to GTPase activity of alpha-tubulin. The chain is Tubulin beta chain (TUB2) from Gibberella zeae (strain ATCC MYA-4620 / CBS 123657 / FGSC 9075 / NRRL 31084 / PH-1) (Wheat head blight fungus).